The chain runs to 393 residues: Pigment production hydroxylase (393 aa).

Functionally, involved in pigment production acting as a hydroxylase that transforms indole to indoxyl, resulting in the formation of indigo. This is Pigment production hydroxylase from Rhodococcus erythropolis (Arthrobacter picolinophilus).